Here is a 284-residue protein sequence, read N- to C-terminus: Bifunctional protein FolD 2 (284 aa).

Residues 164-166 (GRG), Ser189, and Ile230 contribute to the NADP(+) site.

This sequence belongs to the tetrahydrofolate dehydrogenase/cyclohydrolase family. Homodimer.

The catalysed reaction is (6R)-5,10-methylene-5,6,7,8-tetrahydrofolate + NADP(+) = (6R)-5,10-methenyltetrahydrofolate + NADPH. It carries out the reaction (6R)-5,10-methenyltetrahydrofolate + H2O = (6R)-10-formyltetrahydrofolate + H(+). The protein operates within one-carbon metabolism; tetrahydrofolate interconversion. Catalyzes the oxidation of 5,10-methylenetetrahydrofolate to 5,10-methenyltetrahydrofolate and then the hydrolysis of 5,10-methenyltetrahydrofolate to 10-formyltetrahydrofolate. The polypeptide is Bifunctional protein FolD 2 (Desulfitobacterium hafniense (strain Y51)).